A 229-amino-acid chain; its full sequence is Probable GTP-binding protein EngB (229 aa).

The EngB-type G domain maps to 53–228; the sequence is DLPEVAFAGR…RAEIVRLCID (176 aa). GTP-binding positions include 61-68, 88-92, 106-109, 173-176, and 207-209; these read GRSNVGKS, GRTRE, DLPG, TKAD, and TSS. Mg(2+)-binding residues include S68 and T90.

This sequence belongs to the TRAFAC class TrmE-Era-EngA-EngB-Septin-like GTPase superfamily. EngB GTPase family. The cofactor is Mg(2+).

Functionally, necessary for normal cell division and for the maintenance of normal septation. This is Probable GTP-binding protein EngB from Caulobacter vibrioides (strain NA1000 / CB15N) (Caulobacter crescentus).